A 458-amino-acid polypeptide reads, in one-letter code: tRNA modification GTPase MnmE (458 aa).

(6S)-5-formyl-5,6,7,8-tetrahydrofolate contacts are provided by arginine 22, glutamate 85, and arginine 124. Residues 220 to 379 (GLATAIIGRP…LEEAISRLFF (160 aa)) enclose the TrmE-type G domain. A K(+)-binding site is contributed by asparagine 230. Residues 230-235 (NVGKSS), 249-255 (TDIPGTT), and 274-277 (DTAG) contribute to the GTP site. Serine 234 lines the Mg(2+) pocket. Residues threonine 249, isoleucine 251, and threonine 254 each coordinate K(+). Threonine 255 serves as a coordination point for Mg(2+). Lysine 458 is a binding site for (6S)-5-formyl-5,6,7,8-tetrahydrofolate.

Belongs to the TRAFAC class TrmE-Era-EngA-EngB-Septin-like GTPase superfamily. TrmE GTPase family. In terms of assembly, homodimer. Heterotetramer of two MnmE and two MnmG subunits. Requires K(+) as cofactor.

The protein localises to the cytoplasm. In terms of biological role, exhibits a very high intrinsic GTPase hydrolysis rate. Involved in the addition of a carboxymethylaminomethyl (cmnm) group at the wobble position (U34) of certain tRNAs, forming tRNA-cmnm(5)s(2)U34. In Shouchella clausii (strain KSM-K16) (Alkalihalobacillus clausii), this protein is tRNA modification GTPase MnmE.